The chain runs to 24 residues: Lectin (24 aa).

Positions 1-18 are enriched in polar residues; that stretch reads AEEQSFSSTKFSTDQPNL. The interval 1–24 is disordered; the sequence is AEEQSFSSTKFSTDQPNLILQGDA.

This sequence belongs to the leguminous lectin family. In terms of assembly, homotetramer.

This is Lectin from Crotalaria juncea (Sunn hemp).